Here is a 519-residue protein sequence, read N- to C-terminus: Halolysin (519 aa).

Residues 1 to 27 constitute a signal peptide (tat-type signal); sequence MAGTPNFDRRSFLRLAAAAGLTGMAGV. Positions 28–116 are excised as a propeptide; the sequence is TSATPGRSPG…AEKNATHEAL (89 aa). Residues 127 to 400 form the Peptidase S8 domain; sequence QYAPQQVNAD…SGRVDAANAV (274 aa). Active-site charge relay system residues include D154, H193, and S347. The tract at residues 386–425 is disordered; sequence STKQGSGRVDAANAVTTDPGDGGGGGGGGSKETTYDGTLS. Positions 405–415 are enriched in gly residues; sequence GDGGGGGGGGS.

Belongs to the peptidase S8 family. In terms of processing, predicted to be exported by the Tat system. The position of the signal peptide cleavage has not been experimentally proven.

Its subcellular location is the secreted. In terms of biological role, probable secreted halophilic serine protease showing proteolytic activity toward the protease general substrate azocasein. This chain is Halolysin (hly), found in Haloferax mediterranei (strain ATCC 33500 / DSM 1411 / JCM 8866 / NBRC 14739 / NCIMB 2177 / R-4) (Halobacterium mediterranei).